The chain runs to 216 residues: 3-isopropylmalate dehydratase small subunit (216 aa).

The protein belongs to the LeuD family. LeuD type 1 subfamily. Heterodimer of LeuC and LeuD.

It carries out the reaction (2R,3S)-3-isopropylmalate = (2S)-2-isopropylmalate. It participates in amino-acid biosynthesis; L-leucine biosynthesis; L-leucine from 3-methyl-2-oxobutanoate: step 2/4. Its function is as follows. Catalyzes the isomerization between 2-isopropylmalate and 3-isopropylmalate, via the formation of 2-isopropylmaleate. In Psychrobacter arcticus (strain DSM 17307 / VKM B-2377 / 273-4), this protein is 3-isopropylmalate dehydratase small subunit.